Here is a 217-residue protein sequence, read N- to C-terminus: Peroxiredoxin (217 aa).

The Thioredoxin domain occupies 2–159; sequence VVIGEKFPEV…VVRLVKALQT (158 aa). Cys46 functions as the Cysteine sulfenic acid (-SOH) intermediate in the catalytic mechanism. Arg122 provides a ligand contact to substrate.

The protein belongs to the peroxiredoxin family. Prx6 subfamily. In terms of assembly, homodecamer. Pentamer of dimers that assemble into a ring structure.

It localises to the cytoplasm. The enzyme catalyses a hydroperoxide + [thioredoxin]-dithiol = an alcohol + [thioredoxin]-disulfide + H2O. Its function is as follows. Thiol-specific peroxidase that catalyzes the reduction of hydrogen peroxide and organic hydroperoxides to water and alcohols, respectively. Plays a role in cell protection against oxidative stress by detoxifying peroxides. The polypeptide is Peroxiredoxin (Methanococcus maripaludis (strain C5 / ATCC BAA-1333)).